The sequence spans 232 residues: Small ribosomal subunit protein uS3 (232 aa).

The region spanning 39–107 (VRQFLTKELA…PAQINIAEVR (69 aa)) is the KH type-2 domain.

This sequence belongs to the universal ribosomal protein uS3 family. Part of the 30S ribosomal subunit. Forms a tight complex with proteins S10 and S14.

Functionally, binds the lower part of the 30S subunit head. Binds mRNA in the 70S ribosome, positioning it for translation. This Erwinia tasmaniensis (strain DSM 17950 / CFBP 7177 / CIP 109463 / NCPPB 4357 / Et1/99) protein is Small ribosomal subunit protein uS3.